The sequence spans 331 residues: Tyrosine--tRNA ligase (331 aa).

Residues Y31, Y155, Q159, D162, and Q177 each coordinate L-tyrosine. A 'KMSKS' region motif is present at residues 218 to 222 (KMSKS). K221 serves as a coordination point for ATP.

This sequence belongs to the class-I aminoacyl-tRNA synthetase family. TyrS type 4 subfamily. As to quaternary structure, homodimer.

It localises to the cytoplasm. It catalyses the reaction tRNA(Tyr) + L-tyrosine + ATP = L-tyrosyl-tRNA(Tyr) + AMP + diphosphate + H(+). In terms of biological role, catalyzes the attachment of tyrosine to tRNA(Tyr) in a two-step reaction: tyrosine is first activated by ATP to form Tyr-AMP and then transferred to the acceptor end of tRNA(Tyr). The protein is Tyrosine--tRNA ligase of Thermoplasma volcanium (strain ATCC 51530 / DSM 4299 / JCM 9571 / NBRC 15438 / GSS1).